Here is a 499-residue protein sequence, read N- to C-terminus: Ribulose bisphosphate carboxylase large chain (499 aa).

2 residues coordinate substrate: asparagine 139 and threonine 189. Lysine 191 functions as the Proton acceptor in the catalytic mechanism. A substrate-binding site is contributed by lysine 193. Lysine 217, aspartate 219, and glutamate 220 together coordinate Mg(2+). An N6-carboxylysine modification is found at lysine 217. The active-site Proton acceptor is the histidine 309. Residues arginine 310, histidine 342, and serine 394 each contribute to the substrate site.

Belongs to the RuBisCO large chain family. Type I subfamily. As to quaternary structure, heterohexadecamer of 8 large chains and 8 small chains. Requires Mg(2+) as cofactor.

The catalysed reaction is 2 (2R)-3-phosphoglycerate + 2 H(+) = D-ribulose 1,5-bisphosphate + CO2 + H2O. It carries out the reaction D-ribulose 1,5-bisphosphate + O2 = 2-phosphoglycolate + (2R)-3-phosphoglycerate + 2 H(+). Its function is as follows. RuBisCO catalyzes two reactions: the carboxylation of D-ribulose 1,5-bisphosphate, the primary event in carbon dioxide fixation, as well as the oxidative fragmentation of the pentose substrate. Both reactions occur simultaneously and in competition at the same active site. The protein is Ribulose bisphosphate carboxylase large chain of Paraburkholderia xenovorans (strain LB400).